The primary structure comprises 298 residues: uncharacterized protein (298 aa).

The interval 264 to 298 (APPPPLPCITTGPAALEDSPKASKANKGKKAKAKK) is disordered. Residues 287–298 (KANKGKKAKAKK) show a composition bias toward basic residues.

This is an uncharacterized protein from Mus musculus (Mouse).